The chain runs to 375 residues: Fructose-1,6-bisphosphate aldolase/phosphatase (375 aa).

Aspartate 15 functions as the Proton acceptor; for FBP phosphatase activity in the catalytic mechanism. Residues aspartate 15, histidine 22, aspartate 56, and aspartate 57 each coordinate Mg(2+). Histidine 22 is a beta-D-fructose 1,6-bisphosphate binding site. Position 22 (histidine 22) interacts with dihydroxyacetone phosphate. Beta-D-fructose 1,6-bisphosphate is bound at residue tyrosine 94. Residue glutamine 98 coordinates Mg(2+). 107–108 (GN) contacts beta-D-fructose 1,6-bisphosphate. Aspartate 135 is a Mg(2+) binding site. Beta-D-fructose 1,6-bisphosphate is bound at residue lysine 136. Lysine 136 contributes to the dihydroxyacetone phosphate binding site. Tyrosine 237 serves as the catalytic Proton donor/acceptor; for FBP aldolase activity. Residues lysine 240, aspartate 241, and aspartate 242 each contribute to the Mg(2+) site. Lysine 240 serves as the catalytic Schiff-base intermediate with DHAP; for FBP aldolase activity. Residues 250-251 (QS), arginine 274, aspartate 295, and tyrosine 357 each bind beta-D-fructose 1,6-bisphosphate. The dihydroxyacetone phosphate site is built by arginine 274 and aspartate 295.

It belongs to the FBP aldolase/phosphatase family. As to quaternary structure, homooctamer; dimer of tetramers. Mg(2+) is required as a cofactor.

The enzyme catalyses beta-D-fructose 1,6-bisphosphate + H2O = beta-D-fructose 6-phosphate + phosphate. It catalyses the reaction beta-D-fructose 1,6-bisphosphate = D-glyceraldehyde 3-phosphate + dihydroxyacetone phosphate. Its pathway is carbohydrate biosynthesis; gluconeogenesis. Its activity is regulated as follows. Activity is enhanced by dithioerythritol, and is slightly inhibited by fructose 2,6-bisphosphate. AMP does not inhibit the enzyme activity. Its function is as follows. Catalyzes two subsequent steps in gluconeogenesis: the aldol condensation of dihydroxyacetone phosphate (DHAP) and glyceraldehyde-3-phosphate (GA3P) to fructose-1,6-bisphosphate (FBP), and the dephosphorylation of FBP to fructose-6-phosphate (F6P). Does not display hydrolase activity against fructose 2,6-bisphosphate, fructose 6-phosphate, fructose 1-phosphate, glucose 6-phosphate, and glucose 1-phosphate. Exhibits only negligible activity on inositol-1-phosphate (IMP). Is essential for the growth of T.kodakaraensis under gluconeogenic conditions. The protein is Fructose-1,6-bisphosphate aldolase/phosphatase of Thermococcus kodakarensis (strain ATCC BAA-918 / JCM 12380 / KOD1) (Pyrococcus kodakaraensis (strain KOD1)).